We begin with the raw amino-acid sequence, 48 residues long: Photosystem II reaction center protein K (48 aa).

The propeptide occupies 1–11 (MFPSTNQEVLA). Residues 23 to 43 (IVDVLPIIPLLFLLLAFVWQA) form a helical membrane-spanning segment.

This sequence belongs to the PsbK family. As to quaternary structure, PSII is composed of 1 copy each of membrane proteins PsbA, PsbB, PsbC, PsbD, PsbE, PsbF, PsbH, PsbI, PsbJ, PsbK, PsbL, PsbM, PsbT, PsbY, PsbZ, Psb30/Ycf12, at least 3 peripheral proteins of the oxygen-evolving complex and a large number of cofactors. It forms dimeric complexes.

It is found in the plastid. Its subcellular location is the chloroplast thylakoid membrane. One of the components of the core complex of photosystem II (PSII). PSII is a light-driven water:plastoquinone oxidoreductase that uses light energy to abstract electrons from H(2)O, generating O(2) and a proton gradient subsequently used for ATP formation. It consists of a core antenna complex that captures photons, and an electron transfer chain that converts photonic excitation into a charge separation. The chain is Photosystem II reaction center protein K from Euglena sanguinea.